We begin with the raw amino-acid sequence, 242 residues long: Biosynthetic peptidoglycan transglycosylase (242 aa).

A helical membrane pass occupies residues 19–39; sequence LMVVLAVFWGGGIALFSVAPV.

Belongs to the glycosyltransferase 51 family.

The protein resides in the cell inner membrane. The catalysed reaction is [GlcNAc-(1-&gt;4)-Mur2Ac(oyl-L-Ala-gamma-D-Glu-L-Lys-D-Ala-D-Ala)](n)-di-trans,octa-cis-undecaprenyl diphosphate + beta-D-GlcNAc-(1-&gt;4)-Mur2Ac(oyl-L-Ala-gamma-D-Glu-L-Lys-D-Ala-D-Ala)-di-trans,octa-cis-undecaprenyl diphosphate = [GlcNAc-(1-&gt;4)-Mur2Ac(oyl-L-Ala-gamma-D-Glu-L-Lys-D-Ala-D-Ala)](n+1)-di-trans,octa-cis-undecaprenyl diphosphate + di-trans,octa-cis-undecaprenyl diphosphate + H(+). Its pathway is cell wall biogenesis; peptidoglycan biosynthesis. In terms of biological role, peptidoglycan polymerase that catalyzes glycan chain elongation from lipid-linked precursors. The sequence is that of Biosynthetic peptidoglycan transglycosylase from Escherichia coli (strain ATCC 8739 / DSM 1576 / NBRC 3972 / NCIMB 8545 / WDCM 00012 / Crooks).